Here is a 432-residue protein sequence, read N- to C-terminus: D-amino acid dehydrogenase (432 aa).

3–17 (VLVLGGGVIGVTSAY) provides a ligand contact to FAD.

This sequence belongs to the DadA oxidoreductase family. FAD serves as cofactor.

The enzyme catalyses a D-alpha-amino acid + A + H2O = a 2-oxocarboxylate + AH2 + NH4(+). It participates in amino-acid degradation; D-alanine degradation; NH(3) and pyruvate from D-alanine: step 1/1. Oxidative deamination of D-amino acids. This chain is D-amino acid dehydrogenase, found in Delftia acidovorans (strain DSM 14801 / SPH-1).